A 176-amino-acid chain; its full sequence is Lipoprotein signal peptidase (176 aa).

A run of 4 helical transmembrane segments spans residues 26 to 46 (LWMA…IVIV), 60 to 80 (FFNL…ADAG), 82 to 102 (WQRW…VWLL), and 107 to 127 (GQKL…GNVV). Catalysis depends on residues Asp-137 and Asp-155. A helical transmembrane segment spans residues 147–167 (HWPAFNVADCAITVGAVLLIV).

Belongs to the peptidase A8 family.

It is found in the cell inner membrane. It carries out the reaction Release of signal peptides from bacterial membrane prolipoproteins. Hydrolyzes -Xaa-Yaa-Zaa-|-(S,diacylglyceryl)Cys-, in which Xaa is hydrophobic (preferably Leu), and Yaa (Ala or Ser) and Zaa (Gly or Ala) have small, neutral side chains.. Its pathway is protein modification; lipoprotein biosynthesis (signal peptide cleavage). In terms of biological role, this protein specifically catalyzes the removal of signal peptides from prolipoproteins. This Cupriavidus pinatubonensis (strain JMP 134 / LMG 1197) (Cupriavidus necator (strain JMP 134)) protein is Lipoprotein signal peptidase.